A 249-amino-acid polypeptide reads, in one-letter code: MMISDATMMQQNYYLNNAQKASDKALENIAAVRAISGVDSANLAIADSLRSQSSTIDQGVANAYDAIGVLQIADASLTNISQSADRLNELSVKMNNAALNDSQKGMLRTEATRIQESINDSFNNATYNGKNVFQTMNFVVGSGTETTNLNPLATDGLSIDSQDSITNFMDQLGSLRSEIGSGINAITSNINASVQNSINSKAAENNLLNNDMAKNVNDFNANYLKENAAAFVAAQSNMQLQSKIANLLQ.

Post-translationally, the secreted form is about 1 kDa larger than the whole cell lysate form, presumably due to post-translational modification. A 22 kDa form is also found in the secreted fraction, probably resulting from proteolysis.

The protein resides in the secreted. Its subcellular location is the host cell surface. Its function is as follows. Plays a role in virulence. This Campylobacter jejuni subsp. jejuni serotype O:2 (strain ATCC 700819 / NCTC 11168) protein is Secreted flagellin C (flaC).